We begin with the raw amino-acid sequence, 464 residues long: Opioid growth factor receptor-like protein 1 (464 aa).

Disordered stretches follow at residues methionine 1 to lysine 91 and glutamate 309 to glycine 464. Positions glutamine 43 to glycine 59 are enriched in basic and acidic residues. Low complexity predominate over residues alanine 74–glycine 86. The segment covering proline 316–lysine 325 has biased composition (basic and acidic residues). Positions glutamine 327–serine 342 are enriched in polar residues. 3 stretches are compositionally biased toward basic and acidic residues: residues serine 363–serine 382, proline 390–alanine 400, and serine 425–glutamate 439. The segment covering alanine 452–glycine 464 has biased composition (polar residues).

This sequence belongs to the opioid growth factor receptor family.

The sequence is that of Opioid growth factor receptor-like protein 1 (Ogfrl1) from Mus musculus (Mouse).